The chain runs to 351 residues: Uroporphyrinogen decarboxylase (351 aa).

Residues 25 to 29 (RQAGR), Asp74, Tyr151, Ser206, and His325 contribute to the substrate site.

The protein belongs to the uroporphyrinogen decarboxylase family. In terms of assembly, homodimer.

The protein resides in the cytoplasm. It catalyses the reaction uroporphyrinogen III + 4 H(+) = coproporphyrinogen III + 4 CO2. The protein operates within porphyrin-containing compound metabolism; protoporphyrin-IX biosynthesis; coproporphyrinogen-III from 5-aminolevulinate: step 4/4. In terms of biological role, catalyzes the decarboxylation of four acetate groups of uroporphyrinogen-III to yield coproporphyrinogen-III. This Chlorobium phaeobacteroides (strain BS1) protein is Uroporphyrinogen decarboxylase.